A 1346-amino-acid chain; its full sequence is MLATTHMLYVLIATCVIPIFGAALSKTVLYQAPDECRWSGGGEHDITLVCHLRTINSELENTNFSVIQPQNTVRLRLECNDALFFQSSLSPDSFRSLVELRDLTIEYCKLGNLTDGSFRGLQELRNLTIRTHNGDWSTMSLEMASNSFVEFRQLERLDLSLNNIWLIPDGMVCPLKSLQHLNASYNKIQDISNFYFSASLSSRKARVCGSTLQSLDLSANKMVSLPTAMLSALGRLTHLNMAKNSMSFLADRAFEGLLSLRVVDLSANRLTSLPPELFAETKQLQEIYLRNNSINVLAPGIFGELAELLVLDLASNELNSQWINAATFVGLKRLMMLDLSANKISRLEAHIFRPLASLQILKLEDNYIDQLPGGIFADLTNLHTLILSRNRISVIEQRTLQGLKNLLVLSLDFNRISRMDQRSLVNCSQLQDLHLNDNKLQAVPEALAHVQLLKTLDVGENMISQIENTSITQLESLYGLRMTENSLTHIRRGVFDRMSSLQILNLSQNKLKSIEAGSLQRNSQLQAIRLDGNQLKSIAGLFTELPNLVWLNISGNRLEKFDYSHIPIGLQWLDVRANRITQLGNYFEIESELSLSTFDASYNLLTEITASSIPNSVEVLYLNDNQISKIQPYTFFKKPNLTRVDLVRNRLTTLEPNALRLSPIAEDREIPEFYIGHNAYECDCNLDWLQKVNRESRTQPQLMDLDQIHCRLAYARGSSHVSLIEAKSDDFLCKYASHCFALCHCCDFQACDCKMECPDRCSCYHDQSWTSNVVDCSRASYEQTLPSHIPMDSTQLYLDGNNFRELQSHAFIGRKRLKVLHLNHSRIEVLHNRTFYGLLELEVLQLQSNQLKALNGNEFQGLDNLQELYLQHNAIATIDTLTFTHLYHLKILRLDHNAITSFAVWNFLPSYLNELRLASNPWTCSCEFIDKLRDYINRHEYVVDKLKMKCDVISGNSTQQMVIYPGSGEPASLPVVQCSQTLPLGLDNNFNYAEQAGGENASNATSTKMILNQPPKLDYIPILVAILTAFIFVMICISLVFIFRQEMRVWCHSRFGVRLFYNAQKDVDKNEREKLFDAFVSYSSKDELFVNEELAPMLEMGEHRYKLCLHQRDFPVGGYLPETIVQAIDSSRRTIMVVSENFIKSEWCRFEFKSAHQSVLRDRRRRLIVIVLGEVPQKELDPDLRLYLKTNTYLQWGDKLFWQKLRFALPDVSSSQRSNVAGQSCHVPINHASYHHHHHVHQQAMPLPHSVHHHQQQFMLPPPPQQPGSFRRQPSLHQQQQQQQQIRGNNNTTQQQQQQQAALLMGGGSVGGPAPQMIPLAGGIQQQSLPLPPNQQPTPASRNLHM.

The N-terminal stretch at M1–G21 is a signal peptide. The Extracellular segment spans residues A22–P1021. N-linked (GlcNAc...) asparagine glycosylation is found at N63, N112, and N126. LRR repeat units lie at residues L97–G120, L124–N146, F151–P174, K176–A198, G209–A232, G234–G256, L257–E280, K282–E304, A306–G330, L331–P354, L355–D378, T380–G402, K404–N426, C427–V450, L452–Q473, L474–R497, M498–R521, S523–E544, P546–I568, L570–S591, L593–P614, N615–K637, and K638–L661. N-linked (GlcNAc...) asparagine glycosylation occurs at N182. An N-linked (GlcNAc...) asparagine glycan is attached at N291. N-linked (GlcNAc...) asparagine glycosylation occurs at N426. N468 carries an N-linked (GlcNAc...) asparagine glycan. A glycan (N-linked (GlcNAc...) asparagine) is linked at N505. The N-linked (GlcNAc...) asparagine glycan is linked to N552. A glycan (N-linked (GlcNAc...) asparagine) is linked at N640. 4 cysteine pairs are disulfide-bonded: C682/C710, C684/C733, C757/C763, and C761/C776. LRR repeat units follow at residues P790–G813, R814–G837, L838–G861, D863–H885, Y887–P909, and L912–R938. N823 and N832 each carry an N-linked (GlcNAc...) asparagine glycan. C924 and C950 are disulfide-bonded. N-linked (GlcNAc...) asparagine glycans are attached at residues N956 and N1000. The helical transmembrane segment at I1022–I1042 threads the bilayer. Over F1043 to M1346 the chain is Cytoplasmic. In terms of domain architecture, TIR spans K1074 to L1209. The tract at residues H1235–M1346 is disordered. The span at P1267 to Q1300 shows a compositional bias: low complexity.

Belongs to the Toll-like receptor family. May interact (via the extracellular domain) with 18w (via the extracellular domain).

The protein resides in the cell membrane. The protein localises to the apical cell membrane. Its function is as follows. Toll-related receptor. Probably specific to larval innate immunity. Involved in the tracheal immune response of larvae to Gram-negative and perhaps Gram-positive bacteria; upon infection it negatively regulates the immune deficiency (Imd) signaling cascade specifically in the respiratory epithelium to prevent the overexpression of antimicrobial peptides (AMP). Involved in the NF-kappa-B-dependent apoptosis of unfit cells during cell competition. Involved in neuron-specific glycosylation. Positively controls the neuromuscular junction (NMJ) growth in presynaptic motorneurons, probably via the JNK pathway. During development of the peripheral nervous system, may function in the NF-kappa-B (rel) regulatory cascade to repress expression of the neuron-specific genes sc and ase in non-neuronal cells. Promotes heterophilic cell adhesion with 18w in vitro. May have a minor role in leg development. May be involved in determining the proximal cell fate in the wing, possibly by negatively regulating the Dpp signaling pathway. May also be involved in the Dpp signaling pathway in the eye. Possibly functions with 18w and Toll-6 during convergent extension, to help direct proper planar cell polarity, cell intercalation and axis elongation. The sequence is that of Toll-like receptor Tollo from Drosophila melanogaster (Fruit fly).